Consider the following 185-residue polypeptide: Shikimate kinase (185 aa).

Residue 15–20 (GAGKST) coordinates ATP. Ser19 provides a ligand contact to Mg(2+). Substrate is bound by residues Asp37, Arg61, and Gly83. Arg121 contributes to the ATP binding site. Arg146 provides a ligand contact to substrate.

It belongs to the shikimate kinase family. In terms of assembly, monomer. It depends on Mg(2+) as a cofactor.

It is found in the cytoplasm. The catalysed reaction is shikimate + ATP = 3-phosphoshikimate + ADP + H(+). It functions in the pathway metabolic intermediate biosynthesis; chorismate biosynthesis; chorismate from D-erythrose 4-phosphate and phosphoenolpyruvate: step 5/7. In terms of biological role, catalyzes the specific phosphorylation of the 3-hydroxyl group of shikimic acid using ATP as a cosubstrate. This is Shikimate kinase from Blochmanniella floridana.